The sequence spans 248 residues: 5'-nucleotidase SurE (248 aa).

A divalent metal cation contacts are provided by Asp8, Asp9, Ser39, and Asn91.

This sequence belongs to the SurE nucleotidase family. It depends on a divalent metal cation as a cofactor.

Its subcellular location is the cytoplasm. It catalyses the reaction a ribonucleoside 5'-phosphate + H2O = a ribonucleoside + phosphate. Nucleotidase that shows phosphatase activity on nucleoside 5'-monophosphates. The polypeptide is 5'-nucleotidase SurE (Marinomonas sp. (strain MWYL1)).